A 160-amino-acid chain; its full sequence is Cytochrome b6-f complex subunit 4 (160 aa).

Helical transmembrane passes span 36-56 (LLYM…SLAV), 95-115 (LLGV…PFIE), and 131-151 (TLFL…ALPI).

This sequence belongs to the cytochrome b family. PetD subfamily. In terms of assembly, the 4 large subunits of the cytochrome b6-f complex are cytochrome b6, subunit IV (17 kDa polypeptide, petD), cytochrome f and the Rieske protein, while the 4 small subunits are petG, petL, petM and petN. The complex functions as a dimer.

The protein resides in the plastid. It localises to the chloroplast thylakoid membrane. Component of the cytochrome b6-f complex, which mediates electron transfer between photosystem II (PSII) and photosystem I (PSI), cyclic electron flow around PSI, and state transitions. This is Cytochrome b6-f complex subunit 4 from Oltmannsiellopsis viridis (Marine flagellate).